Consider the following 153-residue polypeptide: ORM1-like protein 1 (153 aa).

The Cytoplasmic portion of the chain corresponds to 1-27 (MNVGVAHSEVNPNTRVMNSRGIWLTYA). 2 helical membrane-spanning segments follow: residues 28–46 (LGVG…FSVP) and 47–64 (VVWT…YVFM). Residues 65 to 105 (HAVKGTPFETPDQGKARLLTHWEQLDYGVQFTSSRKFFTIS) lie on the Cytoplasmic side of the membrane. The next 2 membrane-spanning stretches (helical) occupy residues 106-123 (PIIL…DTAH) and 124-140 (FVIN…PKLP). The Cytoplasmic portion of the chain corresponds to 141-153 (QLHGVRIFGINKY).

The protein belongs to the ORM family. In terms of assembly, ceramide-sensitive subunit of the serine palmitoyltransferase (SPT) complex, which is also composed of SPTLC1, SPTLC2/3 and SPTSSA/B.

The protein localises to the endoplasmic reticulum membrane. In terms of biological role, plays an essential role in the homeostatic regulation of sphingolipid de novo biosynthesis by modulating the activity of the serine palmitoyltransferase (SPT) in response to ceramide levels. When complexed to SPT, the binding of ceramides to its N-terminus stabilizes a conformation that block SPT substrate entry, hence preventing SPT catalytic activity. Through this mechanism, maintains ceramide levels at sufficient concentrations for the production of complex sphingolipids, but which prevents the accumulation of ceramides to levels that trigger apoptosis. The sequence is that of ORM1-like protein 1 (ormdl1) from Danio rerio (Zebrafish).